The primary structure comprises 308 residues: D-2-hydroxyacid dehydrogenase (308 aa).

NAD(+) contacts are provided by residues 145-146 (TL), 224-226 (VAR), and Asp-250. Residue Arg-226 is part of the active site. The active site involves Glu-255. The active-site Proton donor is the His-274. 274 to 277 (HVSA) provides a ligand contact to NAD(+).

It belongs to the D-isomer specific 2-hydroxyacid dehydrogenase family. As to quaternary structure, homotetramer.

Functionally, catalyzes the stereospecific NAD(P)H-dependent reduction of 2-ketocarboxylic acids into the corresponding D-2-hydroxycarboxylic acids. Can use both NADPH or NADH as reductant, displaying a marked preference for NADPH over NADH. Shows a broad substrate specificity, although it displays a marked preference for the 2-ketocarboxylic acids having an unbranched chain of 4-5 carbon atoms. This is D-2-hydroxyacid dehydrogenase (ddh) from Haloferax mediterranei (strain ATCC 33500 / DSM 1411 / JCM 8866 / NBRC 14739 / NCIMB 2177 / R-4) (Halobacterium mediterranei).